The chain runs to 237 residues: Eukaryotic translation initiation factor 3 subunit K (237 aa).

Residues 44–219 (CDCNANRALL…EARKAEIRED (176 aa)) enclose the PCI domain.

Belongs to the eIF-3 subunit K family. As to quaternary structure, component of the eukaryotic translation initiation factor 3 (eIF-3) complex.

Its subcellular location is the cytoplasm. In terms of biological role, component of the eukaryotic translation initiation factor 3 (eIF-3) complex, which is involved in protein synthesis of a specialized repertoire of mRNAs and, together with other initiation factors, stimulates binding of mRNA and methionyl-tRNAi to the 40S ribosome. The eIF-3 complex specifically targets and initiates translation of a subset of mRNAs involved in cell proliferation. This is Eukaryotic translation initiation factor 3 subunit K from Neurospora crassa (strain ATCC 24698 / 74-OR23-1A / CBS 708.71 / DSM 1257 / FGSC 987).